The primary structure comprises 599 residues: Elongation factor 4 (599 aa).

Positions Lys2 to Glu184 constitute a tr-type G domain. Residues Asp14–Thr19 and Asn131–Asp134 contribute to the GTP site.

Belongs to the TRAFAC class translation factor GTPase superfamily. Classic translation factor GTPase family. LepA subfamily.

The protein localises to the cell inner membrane. The catalysed reaction is GTP + H2O = GDP + phosphate + H(+). In terms of biological role, required for accurate and efficient protein synthesis under certain stress conditions. May act as a fidelity factor of the translation reaction, by catalyzing a one-codon backward translocation of tRNAs on improperly translocated ribosomes. Back-translocation proceeds from a post-translocation (POST) complex to a pre-translocation (PRE) complex, thus giving elongation factor G a second chance to translocate the tRNAs correctly. Binds to ribosomes in a GTP-dependent manner. The sequence is that of Elongation factor 4 from Sodalis glossinidius (strain morsitans).